Reading from the N-terminus, the 146-residue chain is UPF0735 ACT domain-containing protein TTE2621 (146 aa).

Residues 71–146 (TFSMVLEHMP…GVRKIEVLGE (76 aa)) enclose the ACT domain.

The protein belongs to the UPF0735 family.

This Caldanaerobacter subterraneus subsp. tengcongensis (strain DSM 15242 / JCM 11007 / NBRC 100824 / MB4) (Thermoanaerobacter tengcongensis) protein is UPF0735 ACT domain-containing protein TTE2621.